The primary structure comprises 288 residues: Protease HtpX (288 aa).

The next 2 membrane-spanning stretches (helical) occupy residues 4–24 (VMLFLITNLAVVLVLSVVLNI) and 36–56 (LSGLLVMAAVFGFGGAFISLM). His-143 contributes to the Zn(2+) binding site. Glu-144 is an active-site residue. His-147 lines the Zn(2+) pocket. Helical transmembrane passes span 151 to 171 (GDMVTMTLMQGVVNTFVIFLS) and 193 to 213 (MVYFAVSIALELVFGFLASFI). Residue Glu-222 participates in Zn(2+) binding.

The protein belongs to the peptidase M48B family. Zn(2+) is required as a cofactor.

It is found in the cell inner membrane. The sequence is that of Protease HtpX from Vibrio vulnificus (strain YJ016).